We begin with the raw amino-acid sequence, 290 residues long: Beta carbonic anhydrase 6, mitochondrial (290 aa).

A mitochondrion-targeting transit peptide spans Met1–Gln20. The residue at position 122 (Ser122) is a Phosphoserine. Cys226 is modified (S-nitrosocysteine).

This sequence belongs to the beta-class carbonic anhydrase family. As to expression, strongly expressed in aerial tissues including leaves, stems, flowers and siliques, and, to a lower extent, in roots. Accumulates in guard cells.

The protein resides in the mitochondrion. The enzyme catalyses hydrogencarbonate + H(+) = CO2 + H2O. Its function is as follows. Reversible hydration of carbon dioxide. This Arabidopsis thaliana (Mouse-ear cress) protein is Beta carbonic anhydrase 6, mitochondrial (BCA6).